The sequence spans 401 residues: MSHIQIPPGLTELLQGYTVEVGQQPPDLVDFAVEYFTRLREARRQESDTFIVSPTTFHTQESSAVPVIEEDGESDSDSEDADLEVPVPSKFTRRVSVCAETFNPDEEEEDNDPRVVHPKTDEQRCRLQEACKDILLFKNLDQEQLSQVLDAMFEKIVKTDEHVIDQGDDGDNFYVIERGTYDILVTKDNQTRSVGQYDNRGSFGELALMYNTPRAATIIATSEGSLWGLDRVTFRRIIVKNNAKKRKMFESFIESVPLFKSLEMSERMKIVDVIGEKIYKDGERIIAQGEKADSFYIIESGEVSILIRSKTKSNKNGGNQEVEIAHCHKGQYFGELALVTNKPRAASAYGVGDVKCLVMDVQAFERLLGPCMDIMKRNISHYEEQLVKMFGSNLDLMDPGQ.

N-acetylserine is present on Ser-2. The dimerization and phosphorylation stretch occupies residues 2 to 135 (SHIQIPPGLT…RLQEACKDIL (134 aa)). Ser-47, Ser-74, Ser-76, and Ser-96 each carry phosphoserine. The tract at residues 61-83 (ESSAVPVIEEDGESDSDSEDADL) is disordered. The segment covering 68–83 (IEEDGESDSDSEDADL) has biased composition (acidic residues). Residues 136 to 257 (LFKN…ESVP), Glu-205, Arg-214, 258 to 401 (LFKS…DPGQ), Glu-335, and Arg-344 contribute to the 3',5'-cyclic AMP site. Thr-212 carries the phosphothreonine; by PDPK1 modification. 2 positions are modified to phosphoserine: Ser-347 and Ser-392.

The protein belongs to the cAMP-dependent kinase regulatory chain family. In terms of assembly, the inactive form of the enzyme is composed of two regulatory chains and two catalytic chains. Activation by cAMP produces two active catalytic monomers and a regulatory dimer that binds four cAMP molecules. Interacts with AKAP4. Interacts with CBFA2T3. Interacts with the phosphorylated form of PJA2. Interacts with MYRIP. This interaction may link PKA to components of the exocytosis machinery, thus facilitating exocytosis, including insulin release. Forms a complex composed of PRKAR2A, GSK3B and GSKIP through GSKIP interaction; facilitates PKA-induced phosphorylation and regulates GSK3B activity. Interacts with ADCY8; inhibits adenylate cyclase activity through PKA phosphorylation. In terms of processing, phosphorylated by the activated catalytic chain. Four types of regulatory chains are found: I-alpha, I-beta, II-alpha, and II-beta. Their expression varies among tissues and is in some cases constitutive and in others inducible.

The protein localises to the cytoplasm. It localises to the cell membrane. Functionally, regulatory subunit of the cAMP-dependent protein kinases involved in cAMP signaling in cells. Type II regulatory chains mediate membrane association by binding to anchoring proteins, including the MAP2 kinase. The chain is cAMP-dependent protein kinase type II-alpha regulatory subunit (Prkar2a) from Mus musculus (Mouse).